The primary structure comprises 309 residues: Fe-S cluster assembly protein dre2 (309 aa).

Residues 1–132 form an N-terminal SAM-like domain region; that stretch reads MTTTIVLASP…LRRPAQVEAV (132 aa). Residues 133–195 form a linker region; that stretch reads PLKLSTKKSA…DALVSDEETQ (63 aa). [2Fe-2S] cluster-binding residues include C207, C216, C219, and C221. A fe-S binding site A region spans residues 207-221; it reads CSKPGKKKRCKNCTC. Positions 265, 268, 276, and 279 each coordinate [4Fe-4S] cluster. Short sequence motifs (cx2C motif) lie at residues 265 to 268 and 276 to 279; these read CGSC and CSGC. Positions 265–279 are fe-S binding site B; that stretch reads CGSCYLGDAFRCSGC.

Belongs to the anamorsin family. In terms of assembly, monomer. Interacts with TAH18. Interacts with MIA40. The cofactor is [2Fe-2S] cluster. Requires [4Fe-4S] cluster as cofactor.

The protein localises to the cytoplasm. Its subcellular location is the mitochondrion intermembrane space. Functionally, component of the cytosolic iron-sulfur (Fe-S) protein assembly (CIA) machinery required for the maturation of extramitochondrial Fe-S proteins. Part of an electron transfer chain functioning in an early step of cytosolic Fe-S biogenesis, facilitating the de novo assembly of a [4Fe-4S] cluster on the scaffold complex CFD1-NBP35. Electrons are transferred to DRE2 from NADPH via the FAD- and FMN-containing protein TAH18. TAH18-DRE2 are also required for the assembly of the diferric tyrosyl radical cofactor of ribonucleotide reductase (RNR), probably by providing electrons for reduction during radical cofactor maturation in the catalytic small subunit RNR2. The polypeptide is Fe-S cluster assembly protein dre2 (Schizosaccharomyces japonicus (strain yFS275 / FY16936) (Fission yeast)).